The sequence spans 944 residues: MSDLVMFEPGASTSTDVPTNTDQTAMSTTQVVDALECDTFEGLMNVNETYVEILDSALLSVQQHLDDNLKRQQQLKEEYRLYNRADITKRKVPVHLYMPPYFKDDNNMYPPMSSEAREKQVLKWFDPMMKEEKKWTPSEIKTLRTSVKNALVAHQVQPWCSRRDIVASKLRDADITTSNFDRRQWTMELEDLMRKIAYVREKSEEEVLTASADYTVVPWTAIANFDFKGSRTEWAVKSKWYNELNPKWNKEHWSNEEVEKLKYLRESPKFVSWPMLALNLGTNRTSYQCMEKYKTEVSQHSKEWSQDEDTKLIALTKITSINGHIQWDKVAQCMPGRTRQQVRTRFSHTLDASVKHGRWTDQEDVLLVCAVSRYGAKDWAKVAQAVQNRNDSQCRERWTNVLNRSAHVNERFTLVEDEQLLYAVKVFGKGNWAKCQMLLPKKTSRQLRRRYLQLIAAKLRLAAGFCNAVDAMKSGRRAPEEDELEQEDIVEAEQIPNELMKEVYEKFANENPDMNETPEEFYKRVSALERPAAARIRALKNKPDYQKIQDKINEIVQKHKNAAEIDKELHSSEILSSLTITEVDVRYMIERSKTLTRYYEARQFRKNVDQIGCRVRPIKIDLDPETMPTFDPNDAEDEKQMVIVESLCSVIRAHDVKEWGTKFWNEHRFTAPKYAKRFVENMVINKSKEVAEWYLHVNSKSCNQNDVHCPAKSTLPPTAASFDLHKMLQKARSGLNRLSAEHFYPLDVSLAQQFNFKNDEREGLDGDRRMHIGLSDEVTNSKEYANFYARMRSILLEPMRLGIARESSSDETKRLVRCLAEERACDEEQQVTCDQIRRRRMPDDEIYVTPTSISRELNNGMKIDTTELLANLDKNSAKKIRMKRKIGEVRCDTKIKLLPLVILATVATVAARPARPPRSSAGTPTPSHVSIDTESNISLKVELD.

Positions 1–22 (MSDLVMFEPGASTSTDVPTNTD) are disordered. Polar residues predominate over residues 11 to 22 (ASTSTDVPTNTD). One can recognise a Myb-like 1 domain in the interval 177 to 244 (TSNFDRRQWT…AVKSKWYNEL (68 aa)). In terms of domain architecture, HTH myb-type 1 spans 245–301 (NPKWNKEHWSNEEVEKLKYLRESPKFVSWPMLALNLGTNRTSYQCMEKYKTEVSQHS). The segment at residues 273–297 (WPMLALNLGTNRTSYQCMEKYKTEV) is a DNA-binding region (H-T-H motif). Residues 304–350 (WSQDEDTKLIALTKITSINGHIQWDKVAQCMPGRTRQQVRTRFSHTL) enclose the Myb-like 2 domain. HTH myb-type domains follow at residues 351-406 (DASV…NRSA) and 407-459 (HVNE…AAKL). 2 consecutive DNA-binding regions (H-T-H motif) follow at residues 379–402 (WAKV…TNVL) and 432–455 (WAKC…LQLI). The segment covering 911 to 921 (ARPARPPRSSA) has biased composition (low complexity). The disordered stretch occupies residues 911–935 (ARPARPPRSSAGTPTPSHVSIDTES). Over residues 922–935 (GTPTPSHVSIDTES) the composition is skewed to polar residues.

In terms of tissue distribution, broadly expressed in all tissues, including head, vulva and tail.

It is found in the nucleus. In terms of biological role, binds to the promoter regions of RNA polymerase II and III small-nuclear RNA genes, type 3 RNA polymerase III non-coding RNA genes, small nucleolar RNAs and transfer RNA genes. Required for expression of mature 21U-RNAs. This is snRNA-activating protein complex subunit 4 homolog from Caenorhabditis elegans.